A 308-amino-acid polypeptide reads, in one-letter code: Coenzyme PQQ synthesis protein B (308 aa).

This sequence belongs to the PqqB family.

The protein operates within cofactor biosynthesis; pyrroloquinoline quinone biosynthesis. Its function is as follows. May be involved in the transport of PQQ or its precursor to the periplasm. This chain is Coenzyme PQQ synthesis protein B, found in Klebsiella pneumoniae (strain 342).